A 118-amino-acid polypeptide reads, in one-letter code: UPF0102 protein Swit_0572 (118 aa).

It belongs to the UPF0102 family.

The sequence is that of UPF0102 protein Swit_0572 from Rhizorhabdus wittichii (strain DSM 6014 / CCUG 31198 / JCM 15750 / NBRC 105917 / EY 4224 / RW1) (Sphingomonas wittichii).